The following is a 132-amino-acid chain: Phosphoribosyl-AMP cyclohydrolase (132 aa).

Asp-81 provides a ligand contact to Mg(2+). Cys-82 contributes to the Zn(2+) binding site. 2 residues coordinate Mg(2+): Asp-83 and Asp-85. Zn(2+) contacts are provided by Cys-99 and Cys-106.

The protein belongs to the PRA-CH family. In terms of assembly, homodimer. The cofactor is Mg(2+). Zn(2+) serves as cofactor.

The protein localises to the cytoplasm. It carries out the reaction 1-(5-phospho-beta-D-ribosyl)-5'-AMP + H2O = 1-(5-phospho-beta-D-ribosyl)-5-[(5-phospho-beta-D-ribosylamino)methylideneamino]imidazole-4-carboxamide. Its pathway is amino-acid biosynthesis; L-histidine biosynthesis; L-histidine from 5-phospho-alpha-D-ribose 1-diphosphate: step 3/9. Catalyzes the hydrolysis of the adenine ring of phosphoribosyl-AMP. This chain is Phosphoribosyl-AMP cyclohydrolase, found in Chromobacterium violaceum (strain ATCC 12472 / DSM 30191 / JCM 1249 / CCUG 213 / NBRC 12614 / NCIMB 9131 / NCTC 9757 / MK).